Consider the following 298-residue polypeptide: MATLKEVQLKIGSVKKTRQITSAMKMVATSRLRGSQEKMDRFKPYASKFSEVLGSIAGKAGEEASPLLVPREEPKKVNVILCTSDRGLCGGFNVNLIDKADKFIKSKLQDKEVTFTCFGKKGRDWAKKMSMTIDDQYLGVVGGKFDFSVASTSGQKLINRFLEADVDEVYLVYSEFKNLARQEPVVKQLLPIPSLEAMEKPDEAGAKEETAYLAEHICEPSSDALLGEMLPKNIFIQIYDALLQTSTSENAQRMKAMENATKACKDMIDELQTIFNKTRQAGITADLMDIVGGAEALN.

Belongs to the ATPase gamma chain family. As to quaternary structure, F-type ATPases have 2 components, CF(1) - the catalytic core - and CF(0) - the membrane proton channel. CF(1) has five subunits: alpha(3), beta(3), gamma(1), delta(1), epsilon(1). CF(0) has three main subunits: a, b and c.

It localises to the cell inner membrane. Its function is as follows. Produces ATP from ADP in the presence of a proton gradient across the membrane. The gamma chain is believed to be important in regulating ATPase activity and the flow of protons through the CF(0) complex. The protein is ATP synthase gamma chain of Desulforapulum autotrophicum (strain ATCC 43914 / DSM 3382 / VKM B-1955 / HRM2) (Desulfobacterium autotrophicum).